The chain runs to 145 residues: D-aminoacyl-tRNA deacylase (145 aa).

Positions 137 to 138 match the Gly-cisPro motif, important for rejection of L-amino acids motif; that stretch reads GP.

This sequence belongs to the DTD family. In terms of assembly, homodimer.

It localises to the cytoplasm. It catalyses the reaction glycyl-tRNA(Ala) + H2O = tRNA(Ala) + glycine + H(+). It carries out the reaction a D-aminoacyl-tRNA + H2O = a tRNA + a D-alpha-amino acid + H(+). An aminoacyl-tRNA editing enzyme that deacylates mischarged D-aminoacyl-tRNAs. Also deacylates mischarged glycyl-tRNA(Ala), protecting cells against glycine mischarging by AlaRS. Acts via tRNA-based rather than protein-based catalysis; rejects L-amino acids rather than detecting D-amino acids in the active site. By recycling D-aminoacyl-tRNA to D-amino acids and free tRNA molecules, this enzyme counteracts the toxicity associated with the formation of D-aminoacyl-tRNA entities in vivo and helps enforce protein L-homochirality. This chain is D-aminoacyl-tRNA deacylase, found in Pseudomonas syringae pv. syringae (strain B728a).